An 82-amino-acid polypeptide reads, in one-letter code: Putative Fe(2+) transport protein A (82 aa).

Belongs to the FeoA family.

Functionally, might be involved in Fe(2+) ion uptake. The chain is Putative Fe(2+) transport protein A from Methanocaldococcus jannaschii (strain ATCC 43067 / DSM 2661 / JAL-1 / JCM 10045 / NBRC 100440) (Methanococcus jannaschii).